The sequence spans 225 residues: Putative ATP-dependent Clp protease proteolytic subunit-like (225 aa).

This sequence belongs to the peptidase S14 family.

Has lost the two conserved residues (Ser and His) proposed to be part of the active site. Therefore it could be inactive. This chain is Putative ATP-dependent Clp protease proteolytic subunit-like (clpR), found in Synechocystis sp. (strain ATCC 27184 / PCC 6803 / Kazusa).